A 35-amino-acid chain; its full sequence is SLIEFGKMITEETNRPVFPYEATIVVCDCGNGNGS.

This sequence belongs to the phospholipase A2 family. Group II subfamily. As to quaternary structure, monomer. It depends on Ca(2+) as a cofactor. Post-translationally, contains 14 disulfide bonds. As to expression, expressed by the venom gland.

The protein localises to the secreted. The enzyme catalyses a 1,2-diacyl-sn-glycero-3-phosphocholine + H2O = a 1-acyl-sn-glycero-3-phosphocholine + a fatty acid + H(+). Its function is as follows. Snake venom phospholipase A2 (PLA2) that is the first competitive blocker of nicotinic acetylcholine receptors (nAChRs). Competes with alpha-bungarotoxin for binding to nAChRs and acetylcholine binding proteins (AChBPs) and blocks acetylcholine-elicited current. PLA2 catalyzes the calcium-dependent hydrolysis of the 2-acyl groups in 3-sn-phosphoglycerides. This is Phospholipase A2 bitanarin from Bitis arietans (African puff adder).